The sequence spans 440 residues: Phosphatidylcholine-sterol acyltransferase (440 aa).

Residues 1–24 (MGPPGSPWQWVTLLLGLLLPPAAP) form the signal peptide. The N-linked (GlcNAc...) (complex) asparagine glycan is linked to asparagine 44. Residues cysteine 74 and cysteine 98 are joined by a disulfide bond. Asparagine 108 is a glycosylation site (N-linked (GlcNAc...) (complex) asparagine). The active-site Nucleophile is serine 205. A glycan (N-linked (GlcNAc...) (complex) asparagine) is linked at asparagine 296. Cysteine 337 and cysteine 380 are disulfide-bonded. Catalysis depends on charge relay system residues aspartate 369 and histidine 401. N-linked (GlcNAc...) (complex) asparagine glycosylation is present at asparagine 408. O-linked (GalNAc...) threonine glycosylation is present at threonine 431. Serine 433 carries O-linked (GalNAc...) serine glycosylation.

Belongs to the AB hydrolase superfamily. Lipase family. O- and N-glycosylated. O-glycosylation on Thr-431 and Ser-433 consists of sialylated galactose beta 1--&gt;3N-acetylgalactosamine structures. N-glycosylated sites contain sialylated triantennary and/or biantennary complex structures. As to expression, detected in blood plasma. Detected in cerebral spinal fluid (at protein level). Detected in liver. Expressed mainly in brain, liver and testes.

It localises to the secreted. It catalyses the reaction a sterol + a 1,2-diacyl-sn-glycero-3-phosphocholine = a sterol ester + a 1-acyl-sn-glycero-3-phosphocholine. The catalysed reaction is a 1-O-alkyl-2-acetyl-sn-glycero-3-phosphocholine + H2O = a 1-O-alkyl-sn-glycero-3-phosphocholine + acetate + H(+). It carries out the reaction a 1-hexadecanoyl-2-acyl-sn-glycero-3-phosphocholine + (24S)-hydroxycholesterol = (24S)-24-hydroxycholesterol ester + 1-hexadecanoyl-sn-glycero-3-phosphocholine. The enzyme catalyses (24S)-hydroxycholesterol + 1-hexadecanoyl-2-(9Z,12Z-octadecadienoyl)-sn-glycero-3-phosphocholine = (24S)-hydroxycholesterol 3-linoleoate + 1-hexadecanoyl-sn-glycero-3-phosphocholine. It catalyses the reaction 1-hexadecanoyl-2-(5Z,8Z,11Z,14Z-eicosatetraenoyl)-sn-glycero-3-phosphocholine + cholesterol = cholesteryl (5Z,8Z,11Z,14Z)-eicosatetraenoate + 1-hexadecanoyl-sn-glycero-3-phosphocholine. The catalysed reaction is 1-hexadecanoyl-2-(9Z-octadecenoyl)-sn-glycero-3-phosphocholine + cholesterol = cholesteryl (9Z-octadecenoate) + 1-hexadecanoyl-sn-glycero-3-phosphocholine. It carries out the reaction 1-hexadecanoyl-2-(8Z,11Z,14Z-eicosatrienoyl)-sn-glycero-3-phosphocholine + cholesterol = cholesteryl (8Z,11Z,14Z)-eicosatrienoate + 1-hexadecanoyl-sn-glycero-3-phosphocholine. The enzyme catalyses 1-hexadecanoyl-2-(5Z,8Z,11Z-eicosatrienoyl)-sn-glycero-3-phosphocholine + cholesterol = cholesteryl (5Z,8Z,11Z)-eicosatrienoate + 1-hexadecanoyl-sn-glycero-3-phosphocholine. It catalyses the reaction 1-hexadecanoyl-2-(5Z,8Z,11Z,14Z,17Z-eicosapentaenoyl)-sn-glycero-3-phosphocholine + cholesterol = (5Z,8Z,11Z,14Z,17Z-eicosapentaenoyl)-cholesterol + 1-hexadecanoyl-sn-glycero-3-phosphocholine. The catalysed reaction is 1-hexadecanoyl-2-(9Z,12Z-octadecadienoyl)-sn-glycero-3-phosphocholine + cholesterol = cholesteryl (9Z,12Z)-octadecadienoate + 1-hexadecanoyl-sn-glycero-3-phosphocholine. It carries out the reaction 1-hexadecanoyl-2-(6Z,9Z,12Z-octadecatrienoyl)-sn-glycero-3-phosphocholine + cholesterol = (6Z,9Z,12Z-octadecatrienoyl)-cholesterol + 1-hexadecanoyl-sn-glycero-3-phosphocholine. The enzyme catalyses 1-hexadecanoyl-2-(11Z,14Z,17Z-eicosatrienoyl)-sn-glycero-3-phosphocholine + cholesterol = (11Z,14Z,17Z-eicosatrienoyl)-cholesterol + 1-hexadecanoyl-sn-glycero-3-phosphocholine. It catalyses the reaction 1-hexadecanoyl-2-(9Z,12Z,15Z-octadecatrienoyl)-sn-glycero-3-phosphocholine + cholesterol = (9Z,12Z,15Z-octadecatrienoyl)-cholesterol + 1-hexadecanoyl-sn-glycero-3-phosphocholine. The catalysed reaction is 1-hexadecanoyl-2-(9Z,12Z-octadecadienoyl)-sn-glycero-3-phosphocholine + H2O = (9Z,12Z)-octadecadienoate + 1-hexadecanoyl-sn-glycero-3-phosphocholine + H(+). It carries out the reaction 1-hexadecanoyl-2-(5Z,8Z,11Z,14Z-eicosatetraenoyl)-sn-glycero-3-phosphocholine + H2O = 1-hexadecanoyl-sn-glycero-3-phosphocholine + (5Z,8Z,11Z,14Z)-eicosatetraenoate + H(+). The enzyme catalyses a 1-O-alkyl-2-acetyl-sn-glycero-3-phosphocholine + 1-hexadecanoyl-sn-glycero-3-phosphocholine = 1-hexadecanoyl-2-acetyl-sn-glycero-3-phosphocholine + a 1-O-alkyl-sn-glycero-3-phosphocholine. APOA1 is the most potent activator in plasma. Also activated by APOE, APOC1 and APOA4. Inhibited by haptoglobin and 5,5'-dithiobis-(2-nitrobenzoic acid) (DTNB). Functionally, central enzyme in the extracellular metabolism of plasma lipoproteins. Synthesized mainly in the liver and secreted into plasma where it converts cholesterol and phosphatidylcholines (lecithins) to cholesteryl esters and lysophosphatidylcholines on the surface of high and low density lipoproteins (HDLs and LDLs). The cholesterol ester is then transported back to the liver. Has a preference for plasma 16:0-18:2 or 18:O-18:2 phosphatidylcholines. Also produced in the brain by primary astrocytes, and esterifies free cholesterol on nascent APOE-containing lipoproteins secreted from glia and influences cerebral spinal fluid (CSF) APOE- and APOA1 levels. Together with APOE and the cholesterol transporter ABCA1, plays a key role in the maturation of glial-derived, nascent lipoproteins. Required for remodeling high-density lipoprotein particles into their spherical forms. Catalyzes the hydrolysis of 1-O-alkyl-2-acetyl-sn-glycero-3-phosphocholine (platelet-activating factor or PAF) to 1-O-alkyl-sn-glycero-3-phosphocholine (lyso-PAF). Also catalyzes the transfer of the acetate group from PAF to 1-hexadecanoyl-sn-glycero-3-phosphocholine forming lyso-PAF. Catalyzes the esterification of (24S)-hydroxycholesterol (24(S)OH-C), also known as cerebrosterol to produce 24(S)OH-C monoesters. The sequence is that of Phosphatidylcholine-sterol acyltransferase (LCAT) from Homo sapiens (Human).